We begin with the raw amino-acid sequence, 425 residues long: Xyloglucan O-acetyltransferase 2 (425 aa).

Residues 1–18 are Cytoplasmic-facing; the sequence is MGSPFKDHHTLHPSLVRK. Residues 19 to 38 form a helical; Signal-anchor for type II membrane protein membrane-spanning segment; it reads LIPWTFYAMVPLVLFRVYLY. The Lumenal portion of the chain corresponds to 39-425; that stretch reads PYPLHHTTTT…KWEYASRREQ (387 aa). 4 disulfides stabilise this stretch: cysteine 68–cysteine 118, cysteine 89–cysteine 154, cysteine 98–cysteine 398, and cysteine 313–cysteine 394. A glycan (N-linked (GlcNAc...) asparagine) is linked at asparagine 85. The GDS motif signature appears at 141–143; sequence GDS. Catalysis depends on serine 143, which acts as the Nucleophile. Asparagine 183 and asparagine 259 each carry an N-linked (GlcNAc...) asparagine glycan. Catalysis depends on aspartate 393, which acts as the Proton donor. The DXXH motif motif lies at 393 to 396; the sequence is DCVH. The active-site Proton acceptor is histidine 396.

It belongs to the PC-esterase family. TBL subfamily.

The protein resides in the golgi apparatus membrane. Xyloglucan acetyltransferase that catalyzes the acetylation of fucosylated Gal residues on xyloglucan side chains. Predominantly catalyze 6-O-monoacetylation of Gal residues in the Fuc-Gal-Xyl trisaccharide side chains of xyloglucan oligomers. The protein is Xyloglucan O-acetyltransferase 2 of Populus trichocarpa (Western balsam poplar).